Consider the following 429-residue polypeptide: Light-independent protochlorophyllide reductase subunit N (429 aa).

The [4Fe-4S] cluster site is built by C32, C57, and C118.

Belongs to the BchN/ChlN family. As to quaternary structure, protochlorophyllide reductase is composed of three subunits; BchL, BchN and BchB. Forms a heterotetramer of two BchB and two BchN subunits. Requires [4Fe-4S] cluster as cofactor.

It carries out the reaction chlorophyllide a + oxidized 2[4Fe-4S]-[ferredoxin] + 2 ADP + 2 phosphate = protochlorophyllide a + reduced 2[4Fe-4S]-[ferredoxin] + 2 ATP + 2 H2O. It functions in the pathway porphyrin-containing compound metabolism; bacteriochlorophyll biosynthesis (light-independent). In terms of biological role, component of the dark-operative protochlorophyllide reductase (DPOR) that uses Mg-ATP and reduced ferredoxin to reduce ring D of protochlorophyllide (Pchlide) to form chlorophyllide a (Chlide). This reaction is light-independent. The NB-protein (BchN-BchB) is the catalytic component of the complex. This is Light-independent protochlorophyllide reductase subunit N from Rhodopseudomonas palustris (strain ATCC BAA-98 / CGA009).